The following is a 305-amino-acid chain: Myb-like transcriptional regulator basR (305 aa).

3 Myb-like domains span residues R5–F59, T60–L110, and N111–S162. The tract at residues P175–S215 is disordered. Residues Q198–S207 show a composition bias toward polar residues.

Its subcellular location is the nucleus. Transcription regulator that acts as a central regulatory node for the integration of external bacterial signals leading to the regulation of secondary metabolite gene clusters such as orsellinic, lecanoric acid, cichorine, 2,4-dihydroxy-3-methyl-6-(2-oxopropyl)benzaldehyde (dba), emericellamide or microperfuranone clusters. The protein is Myb-like transcriptional regulator basR of Emericella nidulans (strain FGSC A4 / ATCC 38163 / CBS 112.46 / NRRL 194 / M139) (Aspergillus nidulans).